A 160-amino-acid chain; its full sequence is Cytochrome b6-f complex subunit 4 (160 aa).

The next 3 helical transmembrane spans lie at 36 to 56, 95 to 115, and 131 to 151; these read LLYVFPVVIFGTIGLCTGLAI, LLGIACMAGVPLGLMLVPFIE, and AIFLFGTVVTIWLGIGATFPI.

Belongs to the cytochrome b family. PetD subfamily. In terms of assembly, the 4 large subunits of the cytochrome b6-f complex are cytochrome b6, subunit IV (17 kDa polypeptide, PetD), cytochrome f and the Rieske protein, while the 4 small subunits are PetG, PetL, PetM and PetN. The complex functions as a dimer.

It is found in the cellular thylakoid membrane. Functionally, component of the cytochrome b6-f complex, which mediates electron transfer between photosystem II (PSII) and photosystem I (PSI), cyclic electron flow around PSI, and state transitions. The sequence is that of Cytochrome b6-f complex subunit 4 from Microcystis aeruginosa (strain NIES-843 / IAM M-2473).